A 256-amino-acid chain; its full sequence is NAP1-related protein 1 (256 aa).

The stretch at 23 to 64 (IDAELVLSIEKLQEIQDDLEKINEKASDEVLEVEQKYNVIRK) forms a coiled coil. Residues 220 to 256 (LTYFNNDADEEDFDGDDDGDEEGEEDDDDEEEEDGEE) form a disordered region. Residues 226–256 (DADEEDFDGDDDGDEEGEEDDDDEEEEDGEE) are compositionally biased toward acidic residues.

It belongs to the nucleosome assembly protein (NAP) family. Can form homomeric and heteromeric protein complexes with NRP2. Binds histones H2A and H2B and associates with chromatin in vivo. As to expression, ubiquitous.

It localises to the cytoplasm. The protein resides in the nucleus. In terms of biological role, acts as a histone H2A/H2B chaperone in nucleosome assembly, playing a critical role for the correct expression of genes involved in root proliferation and patterning. Required with NRP2 for the maintenance of cell proliferation and differentiation in postembryonic root growth. Involved in both intramolecular and intermolecular somatic homologous recombination. The chain is NAP1-related protein 1 (NRP1) from Arabidopsis thaliana (Mouse-ear cress).